The following is a 758-amino-acid chain: MIFKIEDVTVYFPYDNIYPEQYEYMVELKRALDAKGHCLLEMPTGTGKTIALLSLITSYRLSRPDSPIKLVYCTRTVHEMEKTLGELKLLHDYQVRHLGTQAKILALGLSSRKNLCVNTKVLAAENRDSVDAACRKRTASWVRALSTENPNVELCDFFENYEKAAENALLPPGVYTLEDLRAFGKNRGWCPYFLARHMIQFANVIVYSYQYLLDPKVAGFISKELQKESVVVFDEAHNIDNVCIEALSVSVRRVTLEGANRNLNKIRQEIDRFKATDAGRLRAEYNRLVEGLALRGDLSGGDQWLANPALPHDILKEAVPGNIRRAEHFVHVLRRLLQYLGVRLDTENVEKESPVSFVSSLNSQAGIEQKTLKFCYDRLQSLMLTLEITDTDEFLPIQTVCDFATLVGTYARGFSIIIEPYDERMPHIPDPILQLSCHDASLAIKPVFDRFQSVVITSGTLSPIDLYPRLLNFTPVVSRSFKMSMTRDCICPMVLTRGSDQLPVSTKFDMRSDPGVVRNYGKLLVEMVSIVPDGVVCFFVSYSYMDGIIATWNETGILKEIMQQKLVFIETQDVVETTLALDNYRRACDCGRGAVFFSVARGKVAEGIDFDRHYGRLVVMYGVPFQYTLSKILRARLEYLHDTFQIKEGDFLTFDALRQAAQCVGRVIRSKADYGMMIFADKRYSRHDKRSKLPGWILSHLRDAHLNLSTDMAIHIAREFLRKMAQPYDKAGTMGRKTLLTQEDLEKMAETGVQDMAY.

The Helicase ATP-binding domain maps to 7–285 (DVTVYFPYDN…TDAGRLRAEY (279 aa)). 42–49 (MPTGTGKT) contacts ATP. Positions 116, 134, 155, and 190 each coordinate [4Fe-4S] cluster. The DEAH box signature appears at 234–238 (DEAHN).

It belongs to the helicase family. RAD3/XPD subfamily. In terms of assembly, component of the 7-subunit TFIIH core complex composed of XPB, XPD, TFB1/GTF2H1, GTF2H2/P44, TFB4/GTF2H3, TFB2/GTF2H4 and TFB5/GTF2H5, which is active in NER. The core complex associates with the 3-subunit CDK-activating kinase (CAK) module composed of CYCH1/cyclin H1, CDKD and MAT1/At4g30820 to form the 10-subunit holoenzyme (holo-TFIIH) active in transcription. Interacts with GTF2H2/p44. It depends on [4Fe-4S] cluster as a cofactor. As to expression, expressed at low levels in all tissues.

The protein resides in the nucleus. It carries out the reaction Couples ATP hydrolysis with the unwinding of duplex DNA at the replication fork by translocating in the 5'-3' direction. This creates two antiparallel DNA single strands (ssDNA). The leading ssDNA polymer is the template for DNA polymerase III holoenzyme which synthesizes a continuous strand.. The catalysed reaction is ATP + H2O = ADP + phosphate + H(+). In terms of biological role, ATP-dependent 5'-3' DNA helicase, component of the general transcription and DNA repair factor IIH (TFIIH) core complex, which is involved in general and transcription-coupled nucleotide excision repair (NER) of damaged DNA and, when complexed to CDK-activating kinase (CAK), involved in transcription by RNA polymerase II. In NER, TFIIH acts by opening DNA around the lesion to allow the excision of the damaged oligonucleotide and its replacement by a new DNA fragment. The ATP-dependent helicase activity of XPD is required for DNA opening. In transcription, TFIIH has an essential role in transcription initiation. When the pre-initiation complex (PIC) has been established, TFIIH is required for promoter opening and promoter escape. Phosphorylation of the C-terminal tail (CTD) of the largest subunit of RNA polymerase II by the kinase module CAK controls the initiation of transcription. XPD acts by forming a bridge between CAK and the core-TFIIH complex. Essential during plant growth. May negatively regulate a common response program mediated by UV damage and heat stress, that leads to tissue death and reduced chloroplast function. This chain is General transcription and DNA repair factor IIH helicase subunit XPD, found in Arabidopsis thaliana (Mouse-ear cress).